Reading from the N-terminus, the 254-residue chain is Large ribosomal subunit protein uL4 (254 aa).

It belongs to the universal ribosomal protein uL4 family. Part of the 50S ribosomal subunit.

One of the primary rRNA binding proteins, this protein initially binds near the 5'-end of the 23S rRNA. It is important during the early stages of 50S assembly. It makes multiple contacts with different domains of the 23S rRNA in the assembled 50S subunit and ribosome. Its function is as follows. Forms part of the polypeptide exit tunnel. The polypeptide is Large ribosomal subunit protein uL4 (Methanothermobacter thermautotrophicus (strain ATCC 29096 / DSM 1053 / JCM 10044 / NBRC 100330 / Delta H) (Methanobacterium thermoautotrophicum)).